The chain runs to 271 residues: Small ribosomal subunit protein uS9m (271 aa).

A mitochondrion-targeting transit peptide spans 1–11; that stretch reads MFRSLAKLRCF. Residues 251–271 form a disordered region; the sequence is KVERKKTGQPKARKKYTWVKR. A compositionally biased stretch (basic residues) spans 252–271; that stretch reads VERKKTGQPKARKKYTWVKR.

It belongs to the universal ribosomal protein uS9 family. In terms of assembly, component of the mitochondrial small ribosomal subunit (mt-SSU). Mature yeast 74S mitochondrial ribosomes consist of a small (37S) and a large (54S) subunit. The 37S small subunit contains a 15S ribosomal RNA (15S mt-rRNA) and at least 32 different proteins. The 54S large subunit contains a 21S rRNA (21S mt-rRNA) and at least 45 different proteins.

It is found in the mitochondrion. In terms of biological role, component of the mitochondrial ribosome (mitoribosome), a dedicated translation machinery responsible for the synthesis of mitochondrial genome-encoded proteins, including at least some of the essential transmembrane subunits of the mitochondrial respiratory chain. The mitoribosomes are attached to the mitochondrial inner membrane and translation products are cotranslationally integrated into the membrane. The polypeptide is Small ribosomal subunit protein uS9m (mrps9) (Schizosaccharomyces pombe (strain 972 / ATCC 24843) (Fission yeast)).